The primary structure comprises 237 residues: UPF0280 protein Mpal_1292 (237 aa).

Belongs to the UPF0280 family.

The polypeptide is UPF0280 protein Mpal_1292 (Methanosphaerula palustris (strain ATCC BAA-1556 / DSM 19958 / E1-9c)).